The following is a 1175-amino-acid chain: 1-phosphatidylinositol 4,5-bisphosphate phosphodiesterase beta-4 (1175 aa).

An N-acetylalanine modification is found at Ala-2. In terms of domain architecture, PI-PLC X-box spans 313-463; it reads QEMDHPLAHY…LKRKILIKNK (151 aa). Active-site residues include His-328 and His-375. Residues 487 to 512 are disordered; it reads AAPASILEDDNEEEIESADQEEEAHP. Positions 493–508 are enriched in acidic residues; sequence LEDDNEEEIESADQEE. Positions 565-681 constitute a PI-PLC Y-box domain; sequence LSTMINYAQP…GYLLKPDFMR (117 aa). The 126-residue stretch at 684-809 folds into the C2 domain; sequence DRTFDPFSET…SLRNEGNKPL (126 aa). Disordered regions lie at residues 860-904 and 1082-1110; these read SDIA…LGSG and KISM…VREL. Composition is skewed to polar residues over residues 885-900 and 1085-1094; these read VTPQ…TTAA and MENSKAISQD. A Phosphothreonine modification is found at Thr-886. The segment covering 1095–1109 has biased composition (basic and acidic residues); the sequence is KSIKNKAERERRVRE.

It depends on Ca(2+) as a cofactor. As to expression, preferentially expressed in the retina.

It is found in the cell membrane. The catalysed reaction is a 1,2-diacyl-sn-glycero-3-phospho-(1D-myo-inositol-4,5-bisphosphate) + H2O = 1D-myo-inositol 1,4,5-trisphosphate + a 1,2-diacyl-sn-glycerol + H(+). The enzyme catalyses a 1,2-diacyl-sn-glycero-3-phospho-(1D-myo-inositol) + H2O = 1D-myo-inositol 1-phosphate + a 1,2-diacyl-sn-glycerol + H(+). In terms of biological role, activated phosphatidylinositol-specific phospholipase C enzymes catalyze the production of the second messenger molecules diacylglycerol (DAG) and inositol 1,4,5-trisphosphate (IP3) involved in G-protein coupled receptor signaling pathways. PLCB4 is a direct effector of the endothelin receptor signaling pathway that plays an essential role in lower jaw and middle ear structures development. The chain is 1-phosphatidylinositol 4,5-bisphosphate phosphodiesterase beta-4 from Rattus norvegicus (Rat).